Here is a 134-residue protein sequence, read N- to C-terminus: Replication enhancer protein (134 aa).

Belongs to the geminiviridae replication enhancer protein family. In terms of assembly, homooligomer. Interacts with the replication-associated protein (REP). Interacts with host proliferating cell nuclear antigen (PCNA). Interacts with host retinoblastoma-related protein 1 (RBR1), and may thereby deregulate the host cell cycle. Oligomerization and interaction with PCNA are necessary for optimal replication enhancement.

In terms of biological role, increases viral DNA accumulation. Enhances infectivity and symptom expression. The chain is Replication enhancer protein from Tomato yellow leaf curl Sardinia virus (TYLCSV).